The chain runs to 729 residues: Receptor-like protein 2 (729 aa).

The N-terminal stretch at 1–44 (MRSKAKGLVRPLITKPVQPLSSHMHLFLLCILFLSALFLTLSEA) is a signal peptide. An N-cap region spans residues 45–82 (VCNLQDRESLIWFSGNVSSSVSPLNWNLSIDCCSWEGI). Over 45–707 (VCNLQDRESL…AKENDELNRT (663 aa)) the chain is Extracellular. N-linked (GlcNAc...) asparagine glycans are attached at residues Asn60 and Asn71. LRR repeat units follow at residues 89-113 (DSHV…VQNI), 114-137 (HRLS…FFST), 139-163 (DQLM…AFGN), 168-193 (FFSI…VYLQ), 195-219 (TINL…MCRS), 220-244 (SPQL…LGRC), 245-268 (LRLT…IYNL), 269-292 (SELE…ITRL), 293-316 (RKLT…IGNL), 317-340 (SSLR…LANC), 342-364 (KLVK…EFSQ), 365-389 (LQSL…IFSC), 391-413 (SLTA…VLEL), 414-437 (ESLS…SILQ), 439-464 (CRKL…DFLS), 468-492 (FPKL…LINL), 493-515 (NKVE…WLGT), 516-540 (LPDL…LFQL), 542-560 (ALMS…PIFL), and 561-584 (NPNN…IYIR). Residues Asn145 and Asn163 are each glycosylated (N-linked (GlcNAc...) asparagine). N-linked (GlcNAc...) asparagine glycans are attached at residues Asn202 and Asn205. Residues Asn256, Asn267, Asn288, Asn315, Asn330, and Asn339 are each glycosylated (N-linked (GlcNAc...) asparagine). An N-linked (GlcNAc...) asparagine glycan is attached at Asn375. The N-linked (GlcNAc...) asparagine glycan is linked to Asn428. Residues Asn564, Asn587, Asn611, Asn622, Asn635, Asn657, and Asn705 are each glycosylated (N-linked (GlcNAc...) asparagine). LRR repeat units follow at residues 599–623 (LKVL…LSNL), 624–647 (TNLE…LTNL), and 649–672 (FLSY…QFDT). The C-cap/acidic domain stretch occupies residues 690 to 707 (LTSCKPTRAKENDELNRT). A helical membrane pass occupies residues 708–728 (FLMGIAIGYFLSFVSILVVRA). Residue Trp729 is a topological domain, cytoplasmic.

It belongs to the RLP family.

Its subcellular location is the cell membrane. Functionally, involved in the perception of CLV3 and CLV3-like peptides, that act as extracellular signals regulating meristems maintenance. In Arabidopsis thaliana (Mouse-ear cress), this protein is Receptor-like protein 2.